A 309-amino-acid polypeptide reads, in one-letter code: MASTSNVTELIFTGLFQDPAVQSVCFVVFLPVYLATVVGNGLIVLTVSISKSLDSPMYFFLSCLSLVEISYSSTIAPKFIIDLLAKIKTISLEGCLTQIFFFHFFGVAEILLIVVMAYDCYVAICKPLHYMNIISRQLCHLLVAGSWLGGFCHSIIQILVIIQLPFCGPNVIDHYFCDLQPLFKLACTDTFMEGVIVLANSGLFSVFSFLILVSSYIVILVNLRNHSAEGRHKALSTCASHITVVILFFGPAIFLYMRPSSTFTEDKLVAVFYTVITPMLNPIIYTLRNAEVKIAIRRLWSKKENPGRE.

Residues 1–23 (MASTSNVTELIFTGLFQDPAVQS) are Extracellular-facing. Asparagine 6 carries an N-linked (GlcNAc...) asparagine glycan. The chain crosses the membrane as a helical span at residues 24-47 (VCFVVFLPVYLATVVGNGLIVLTV). At 48 to 55 (SISKSLDS) the chain is on the cytoplasmic side. Residues 56–77 (PMYFFLSCLSLVEISYSSTIAP) traverse the membrane as a helical segment. Residues 78 to 98 (KFIIDLLAKIKTISLEGCLTQ) are Extracellular-facing. Cysteine 95 and cysteine 187 are joined by a disulfide. A helical transmembrane segment spans residues 99-118 (IFFFHFFGVAEILLIVVMAY). At 119–137 (DCYVAICKPLHYMNIISRQ) the chain is on the cytoplasmic side. A helical transmembrane segment spans residues 138 to 156 (LCHLLVAGSWLGGFCHSII). The Extracellular segment spans residues 157–193 (QILVIIQLPFCGPNVIDHYFCDLQPLFKLACTDTFME). A helical transmembrane segment spans residues 194-217 (GVIVLANSGLFSVFSFLILVSSYI). The Cytoplasmic portion of the chain corresponds to 218–233 (VILVNLRNHSAEGRHK). Residues 234-256 (ALSTCASHITVVILFFGPAIFLY) traverse the membrane as a helical segment. Over 257 to 267 (MRPSSTFTEDK) the chain is Extracellular. The helical transmembrane segment at 268 to 287 (LVAVFYTVITPMLNPIIYTL) threads the bilayer. Over 288-309 (RNAEVKIAIRRLWSKKENPGRE) the chain is Cytoplasmic.

Belongs to the G-protein coupled receptor 1 family.

The protein localises to the cell membrane. Functionally, odorant receptor. This chain is Olfactory receptor 4B1 (OR4B1), found in Homo sapiens (Human).